The chain runs to 298 residues: Zinc import ATP-binding protein ZnuC (298 aa).

In terms of domain architecture, ABC transporter spans 17 to 232 (IELRNAGVYR…PEYVRLFGSR (216 aa)). 49 to 56 (GPNGAGKS) contacts ATP. The tract at residues 273–298 (RGHCHVEDGHHHDHEHHHHEGGQPRA) is disordered. Residues 276 to 298 (CHVEDGHHHDHEHHHHEGGQPRA) are compositionally biased toward basic and acidic residues.

It belongs to the ABC transporter superfamily. Zinc importer (TC 3.A.1.15.5) family. As to quaternary structure, the complex is composed of two ATP-binding proteins (ZnuC), two transmembrane proteins (ZnuB) and a solute-binding protein (ZnuA).

It localises to the cell inner membrane. The catalysed reaction is Zn(2+)(out) + ATP(in) + H2O(in) = Zn(2+)(in) + ADP(in) + phosphate(in) + H(+)(in). Part of the ABC transporter complex ZnuABC involved in zinc import. Responsible for energy coupling to the transport system. In Brucella abortus (strain 2308), this protein is Zinc import ATP-binding protein ZnuC.